A 567-amino-acid polypeptide reads, in one-letter code: Urease subunit alpha (567 aa).

Positions 129–567 (GGVDSHIHFI…LPLAQRYFLF (439 aa)) constitute a Urease domain. Positions 134, 136, and 217 each coordinate Ni(2+). The residue at position 217 (lysine 217) is an N6-carboxylysine. Position 219 (histidine 219) interacts with substrate. 2 residues coordinate Ni(2+): histidine 246 and histidine 272. The Proton donor role is filled by histidine 320. Residue aspartate 360 participates in Ni(2+) binding.

It belongs to the metallo-dependent hydrolases superfamily. Urease alpha subunit family. In terms of assembly, heterotrimer of UreA (gamma), UreB (beta) and UreC (alpha) subunits. Three heterotrimers associate to form the active enzyme. It depends on Ni cation as a cofactor. In terms of processing, carboxylation allows a single lysine to coordinate two nickel ions.

It is found in the cytoplasm. The catalysed reaction is urea + 2 H2O + H(+) = hydrogencarbonate + 2 NH4(+). It functions in the pathway nitrogen metabolism; urea degradation; CO(2) and NH(3) from urea (urease route): step 1/1. This chain is Urease subunit alpha, found in Pseudomonas putida (strain ATCC 700007 / DSM 6899 / JCM 31910 / BCRC 17059 / LMG 24140 / F1).